We begin with the raw amino-acid sequence, 385 residues long: Ethanolamine kinase 2 (385 aa).

Belongs to the choline/ethanolamine kinase family. As to expression, expressed in testis and liver. Low expression in ovary and kidney.

It carries out the reaction ethanolamine + ATP = phosphoethanolamine + ADP + H(+). The protein operates within phospholipid metabolism; phosphatidylethanolamine biosynthesis; phosphatidylethanolamine from ethanolamine: step 1/3. Its function is as follows. Highly specific for ethanolamine phosphorylation. Does not have choline kinase activity. This Mus musculus (Mouse) protein is Ethanolamine kinase 2 (Etnk2).